A 1715-amino-acid polypeptide reads, in one-letter code: Protein PHYLLO, chloroplastic (1715 aa).

The transit peptide at 1-19 directs the protein to the chloroplast; the sequence is MRSSFLVSNPPFLPSLIPR. Residues 20–273 are inactive isochorismate synthase; that stretch reads YSSRKSIRRS…EKSIFQVSSH (254 aa). Positions 363–933 are 2-succinyl-5-enolpyruvyl-6-hydroxy-3-cyclohexene-1-carboxylate synthase; that stretch reads NAVWASAIIE…GTKSELEDAL (571 aa). A helical transmembrane segment spans residues 429–449; sequence AVIITSSGTAVSNLLPAVVEA. The tract at residues 981–1364 is O-succinylbenzoate synthase; the sequence is FLHPMIKNVL…SEDVMMNTLG (384 aa). Lys-1170 serves as the catalytic Proton donor; for the o-succinylbenzoate synthase activity. Mg(2+) contacts are provided by Asp-1202, Glu-1228, and Asp-1251. Residue Lys-1279 is the Proton acceptor; for the o-succinylbenzoate synthase activity of the active site. The 2-succinyl-6-hydroxy-2,4-cyclohexadiene-1-carboxylate synthase stretch occupies residues 1418–1715; sequence HFIRVHDVGE…QKLLLALKEM (298 aa). An AB hydrolase-1 domain is found at 1435 to 1540; that stretch reads LFLHGFLGTG…EGAVVVSGSP (106 aa).

It in the N-terminal section; belongs to the isochorismate synthase family. In the 2nd section; belongs to the TPP enzyme family. MenD subfamily. This sequence in the 3rd section; belongs to the mandelate racemase/muconate lactonizing enzyme family. MenC type 1 subfamily. The protein in the C-terminal section; belongs to the AB hydrolase superfamily. MenH family. Requires Mg(2+) as cofactor. It depends on Mn(2+) as a cofactor. Thiamine diphosphate serves as cofactor.

Its subcellular location is the plastid. The protein resides in the chloroplast membrane. The catalysed reaction is isochorismate + 2-oxoglutarate + H(+) = 5-enolpyruvoyl-6-hydroxy-2-succinyl-cyclohex-3-ene-1-carboxylate + CO2. The enzyme catalyses (1R,6R)-6-hydroxy-2-succinyl-cyclohexa-2,4-diene-1-carboxylate = 2-succinylbenzoate + H2O. It catalyses the reaction 5-enolpyruvoyl-6-hydroxy-2-succinyl-cyclohex-3-ene-1-carboxylate = (1R,6R)-6-hydroxy-2-succinyl-cyclohexa-2,4-diene-1-carboxylate + pyruvate. Functionally, multifunctional enzyme required for phylloquinone (vitamin K1) biosynthesis. This is Protein PHYLLO, chloroplastic (PHYLLO) from Arabidopsis thaliana (Mouse-ear cress).